The chain runs to 241 residues: Biosynthetic peptidoglycan transglycosylase (241 aa).

A helical membrane pass occupies residues 18 to 38 (GVIGIIALWMAGILIFAFLPV).

It belongs to the glycosyltransferase 51 family.

The protein localises to the cell inner membrane. It carries out the reaction [GlcNAc-(1-&gt;4)-Mur2Ac(oyl-L-Ala-gamma-D-Glu-L-Lys-D-Ala-D-Ala)](n)-di-trans,octa-cis-undecaprenyl diphosphate + beta-D-GlcNAc-(1-&gt;4)-Mur2Ac(oyl-L-Ala-gamma-D-Glu-L-Lys-D-Ala-D-Ala)-di-trans,octa-cis-undecaprenyl diphosphate = [GlcNAc-(1-&gt;4)-Mur2Ac(oyl-L-Ala-gamma-D-Glu-L-Lys-D-Ala-D-Ala)](n+1)-di-trans,octa-cis-undecaprenyl diphosphate + di-trans,octa-cis-undecaprenyl diphosphate + H(+). It functions in the pathway cell wall biogenesis; peptidoglycan biosynthesis. In terms of biological role, peptidoglycan polymerase that catalyzes glycan chain elongation from lipid-linked precursors. This chain is Biosynthetic peptidoglycan transglycosylase, found in Yersinia pestis bv. Antiqua (strain Antiqua).